Reading from the N-terminus, the 55-residue chain is Variant surface glycoprotein ETAT 1.2 (55 aa).

Asn-34 is a glycosylation site (N-linked (GlcNAc...) asparagine). A lipid anchor (GPI-anchor amidated asparagine) is attached at Asn-38. Positions 39 to 55 (NSFAIKTSTLLLAVLLF) are cleaved as a propeptide — removed in mature form.

Its subcellular location is the cell membrane. VSG forms a coat on the surface of the parasite. The trypanosome evades the immune response of the host by expressing a series of antigenically distinct VSGs from an estimated 1000 VSG genes. In Trypanosoma brucei rhodesiense, this protein is Variant surface glycoprotein ETAT 1.2.